Reading from the N-terminus, the 453-residue chain is MSGPTMDHQEPYSVQATAAIASAITFLILFTIFGNALVILAVLTSRSLRAPQNLFLVSLAAADILVATLIIPFSLANELLGYWYFWRAWCEVYLALDVLFCTSSIVHLCAISLDRYWAVSRALEYNSKRTPRRIKCIILTVWLIAAVISLPPLIYKGDQRPEPRGLPQCELNQEAWYILASSIGSFFAPCLIMILVYLRIYVIAKRSHCRGLGAKRGSGEGESKKPQPVAGGVPTSAKVPTLVSPLSSVGEANGHPKPPREKEEGETPEDPEARALPPTWSALPRSGQGQKKGTSGATAEEGDEEDEEEVEECEPQTLPASPASVCNPPLQQPQTSRVLATLRGQVLLGKNVGVASGQWWRRRTQLSREKRFTFVLAVVIGVFVVCWFPFFFSYSLGAICPQHCKVPHGLFQFFFWIGYCNSSLNPVIYTVFNQDFRRAFRRILCRPWTQTGW.

Residues 1-17 (MSGPTMDHQEPYSVQAT) are Extracellular-facing. A helical transmembrane segment spans residues 18-42 (AAIASAITFLILFTIFGNALVILAV). Topologically, residues 43–54 (LTSRSLRAPQNL) are cytoplasmic. The chain crosses the membrane as a helical span at residues 55–80 (FLVSLAAADILVATLIIPFSLANELL). Residues 81 to 90 (GYWYFWRAWC) lie on the Extracellular side of the membrane. Cys90 and Cys169 are disulfide-bonded. Residues 91–113 (EVYLALDVLFCTSSIVHLCAISL) traverse the membrane as a helical segment. At 114–135 (DRYWAVSRALEYNSKRTPRRIK) the chain is on the cytoplasmic side. A helical transmembrane segment spans residues 136–158 (CIILTVWLIAAVISLPPLIYKGD). Over 159 to 174 (QRPEPRGLPQCELNQE) the chain is Extracellular. The chain crosses the membrane as a helical span at residues 175 to 198 (AWYILASSIGSFFAPCLIMILVYL). The Cytoplasmic segment spans residues 199-375 (RIYVIAKRSH…LSREKRFTFV (177 aa)). Positions 213 to 331 (GAKRGSGEGE…PASVCNPPLQ (119 aa)) are disordered. Residues 287-297 (GQGQKKGTSGA) are compositionally biased toward polar residues. Acidic residues predominate over residues 300 to 314 (EEGDEEDEEEVEECE). Residues 376–399 (LAVVIGVFVVCWFPFFFSYSLGAI) traverse the membrane as a helical segment. The Extracellular portion of the chain corresponds to 400-408 (CPQHCKVPH). Residues 409–432 (GLFQFFFWIGYCNSSLNPVIYTVF) form a helical membrane-spanning segment. Residues 433–453 (NQDFRRAFRRILCRPWTQTGW) are Cytoplasmic-facing. Cys445 carries the S-palmitoyl cysteine lipid modification.

This sequence belongs to the G-protein coupled receptor 1 family. Adrenergic receptor subfamily. ADRA2B sub-subfamily. In terms of assembly, interacts with RAB26. Interacts with PPP1R9B. Interacts with GGA1, GGA2 and GGA3.

The protein localises to the cell membrane. Alpha-2 adrenergic receptors mediate the catecholamine-induced inhibition of adenylate cyclase through the action of G proteins. The polypeptide is Alpha-2B adrenergic receptor (Adra2b) (Rattus norvegicus (Rat)).